The chain runs to 555 residues: Formate--tetrahydrofolate ligase (555 aa).

65 to 72 (TPAGEGKS) serves as a coordination point for ATP.

It belongs to the formate--tetrahydrofolate ligase family.

The enzyme catalyses (6S)-5,6,7,8-tetrahydrofolate + formate + ATP = (6R)-10-formyltetrahydrofolate + ADP + phosphate. It participates in one-carbon metabolism; tetrahydrofolate interconversion. The chain is Formate--tetrahydrofolate ligase from Staphylococcus aureus (strain NCTC 8325 / PS 47).